The primary structure comprises 200 residues: Recombination protein RecR (200 aa).

The C4-type zinc finger occupies 58–75; the sequence is CPLCFTLKESKEADCHFC. In terms of domain architecture, Toprim spans 82–177; that stretch reads QSLCIVASPK…NISRLALGLP (96 aa).

The protein belongs to the RecR family.

May play a role in DNA repair. It seems to be involved in an RecBC-independent recombinational process of DNA repair. It may act with RecF and RecO. In Chlamydia pneumoniae (Chlamydophila pneumoniae), this protein is Recombination protein RecR.